The primary structure comprises 616 residues: MGRIGISCLFPASWHFSISPVGCPRILNTNLRQIMVISVLAAAVSLLYFSVVIIRNKYGRLTRDKKFQRYLARVTDIEATDTNNPNVNYGIVVDCGSSGSRVFVYCWPRHNGNPHDLLDIRQMRDKNRKPVVMKIKPGISEFATSPEKVSDYISPLLNFAAEHVPRAKHKETPLYILCTAGMRILPESQQKAILEDLLTDIPVHFDFLFSDSHAEVISGKQEGVYAWIGINFVLGRFEHIEDDDEAVVEVNIPGSESSEAIVRKRTAGILDMGGVSTQIAYEVPKTVSFASSQQEEVAKNLLAEFNLGCDVHQTEHVYRVYVATFLGFGGNAARQRYEDRIFANTIQKNRLLGKQTGLTPDMPYLDPCLPLDIKDEIQQNGQTIYLRGTGDFDLCRETIQPFMNKTNETQTSLNGVYQPPIHFQNSEFYGFSEFYYCTEDVLRMGGDYNAAKFTKAAKDYCATKWSILRERFDRGLYASHADLHRLKYQCFKSAWMFEVFHRGFSFPVNYKSLKTALQVYDKEVQWTLGAILYRTRFLPLRDIQQEAFRASHTHWRGVSFVYNHYLFSGCFLVVLLAILLYLLRLRRIHRRTPRSSSAAALWMEEGLPAQNAPGTL.

Residues 1–33 are Cytoplasmic-facing; it reads MGRIGISCLFPASWHFSISPVGCPRILNTNLRQ. A helical membrane pass occupies residues 34 to 54; that stretch reads IMVISVLAAAVSLLYFSVVII. Over 55–559 the chain is Lumenal; the sequence is RNKYGRLTRD…ASHTHWRGVS (505 aa). Residue Glu-222 is the Proton acceptor of the active site. A disulfide bond links Cys-368 and Cys-395. 2 N-linked (GlcNAc...) asparagine glycosylation sites follow: Asn-404 and Asn-407. Cys-461 and Cys-490 are disulfide-bonded. A helical membrane pass occupies residues 560–580; that stretch reads FVYNHYLFSGCFLVVLLAILL. The Cytoplasmic segment spans residues 581–616; it reads YLLRLRRIHRRTPRSSSAAALWMEEGLPAQNAPGTL.

It belongs to the GDA1/CD39 NTPase family. It depends on Ca(2+) as a cofactor. Mg(2+) is required as a cofactor. Ubiquitous. Highest expression in testis and lowest in bladder.

It localises to the cytoplasmic vesicle. Its subcellular location is the autophagosome membrane. The protein resides in the lysosome membrane. It is found in the golgi apparatus membrane. The catalysed reaction is a ribonucleoside 5'-diphosphate + H2O = a ribonucleoside 5'-phosphate + phosphate + H(+). The enzyme catalyses a ribonucleoside 5'-triphosphate + H2O = a ribonucleoside 5'-diphosphate + phosphate + H(+). It catalyses the reaction UDP + H2O = UMP + phosphate + H(+). It carries out the reaction UTP + H2O = UDP + phosphate + H(+). The catalysed reaction is CTP + H2O = CDP + phosphate + H(+). The enzyme catalyses GDP + H2O = GMP + phosphate + H(+). It catalyses the reaction GTP + H2O = GDP + phosphate + H(+). It carries out the reaction 5-methyl-UTP + H2O = 5-methyl-UDP + phosphate + H(+). Catalyzes the hydrolysis of nucleoside triphosphates and diphosphates in a calcium- or magnesium-dependent manner, with a preference for pyrimidines. Preferentially hydrolyzes UTP and TTP. AMP, ADP, ATP and UMP are not substrates. Preferentially activated by Ca(2+) over Mg(2+). Its function is as follows. Has a broad substrate specificity with the ability of cleaving all nucleotide di- and triphosphates with the exception of adenosine di- and triphosphate (ADP and ATP). Preferentially hydrolyzes CTP, UDP, CDP, GTP and GDP. Can use either Ca(2+) or Mg(2+) equally. The sequence is that of Ectonucleoside triphosphate diphosphohydrolase 4 from Homo sapiens (Human).